The chain runs to 437 residues: MKKLLSIEKVKGREILDSRGNPTVEAEVILSDGSVGMAAAPSGASTGAFEAVELRDGDKGRYLGNGVLNAVEHVKKELSEAVCGRNPLNQVEIDAAMIDADGTENKGKLGANAILAVSLATAKAAATAVSLPLYQYLGGTNARTLPVPMMNIINGGKHADSSLNIQEFMIMPVGAKSFSEALEHSTTVFHTLKKLLKADGYVTAVGDEGGFAPKFNSDEQALEYIVEAIKKAGFEPGSDFYIAMDAAATEMYDEAKKIGKEGNYLFWKSGELKTVDEMIDYWENLCNKYPILSLEDGLAEEDWEGWKKLTERLGSRIQLVGDDLFVTNTNRISKGIKEDISNSVLIKFNQIGSLTETLNAIEMTKNQGWTAIVSHRSGETEDTTIADIAVATNAGQIKTGAPSRSDRVAKYNQLLRIEQELGQAAIYPGKKAFKVLK.

Gln-166 contacts (2R)-2-phosphoglycerate. Glu-208 acts as the Proton donor in catalysis. Residues Asp-245, Glu-295, and Asp-322 each coordinate Mg(2+). Lys-347, Arg-376, Ser-377, and Lys-398 together coordinate (2R)-2-phosphoglycerate. Lys-347 serves as the catalytic Proton acceptor.

This sequence belongs to the enolase family. The cofactor is Mg(2+).

It localises to the cytoplasm. The protein resides in the secreted. It is found in the cell surface. It carries out the reaction (2R)-2-phosphoglycerate = phosphoenolpyruvate + H2O. It functions in the pathway carbohydrate degradation; glycolysis; pyruvate from D-glyceraldehyde 3-phosphate: step 4/5. Its function is as follows. Catalyzes the reversible conversion of 2-phosphoglycerate (2-PG) into phosphoenolpyruvate (PEP). It is essential for the degradation of carbohydrates via glycolysis. In Lachnoclostridium phytofermentans (strain ATCC 700394 / DSM 18823 / ISDg) (Clostridium phytofermentans), this protein is Enolase.